A 225-amino-acid polypeptide reads, in one-letter code: Plasma membrane-associated cation-binding protein 1 (225 aa).

A lipid anchor (N-myristoyl glycine) is attached at G2. T32 carries the phosphothreonine modification. A Phosphoserine modification is found at S107. Over residues 140–197 the composition is skewed to basic and acidic residues; the sequence is PVEEVKAEEPAKTEEPAKTEGTSGEKEEIVEETKKGETPETAVVEEKKPEVEEKKEEA. A disordered region spans residues 140–225; sequence PVEEVKAEEP…TAPVAEPPKP (86 aa). Phosphothreonine is present on residues T152 and T177.

The protein belongs to the DREPP family. As to quaternary structure, interacts with Turnip mosaic virus (TuMV) P3N-PIPO. Requires Cu(2+) as cofactor. Mostly expressed in the basal region of hypocotyls. Expressed in seedlings, roots, shoots, stems, leaves (e.g. in epidermis and vascular tissues), flowers (e.g. in pistils and anthers) and siliques (at protein level).

The protein localises to the cell membrane. Its subcellular location is the cytoplasm. It localises to the cytoskeleton. The protein resides in the cell junction. It is found in the plasmodesma. In terms of biological role, may be involved in intracellular signaling through interaction with PtdInsPs and calmodulin (CaM); may keep PtdInsPs attached to the plasma membrane until Ca(2+)-CaM reaches a competitive concentration subsequent to an increase triggered by a stimulus, thus leading to PtdInsPs release and subsequent activation of InsPs-dependent signaling cascade. Interacts competitively at the N-terminus with calcium ions and CaM (in a calcium-dependent manner), and with the phosphatidylinositol phosphates PtdIns(3,4,5)P(3), PtdIns(3,4)P(2), PtdIns(4,5)P(2) and PtdIns(3,5)P(2). Also binds weakly to PtdIns(3)P, PtdIns(4)P and PtdIns(5)P. Negative regulator of hypocotyl cell elongation by destabilizing cortical microtubules in a calcium-dependent manner. Binds directly to and destabilized microtubules to enhance microtubule depolymerization when cytoplasmic calcium increases. In case of Turnip mosaic virus (TuMV) infection, confers sensitivity by promoting viral cell-to-cell movement through interaction with viral P3N-PIPO. The sequence is that of Plasma membrane-associated cation-binding protein 1 (PCAP1) from Arabidopsis thaliana (Mouse-ear cress).